The following is a 532-amino-acid chain: 2,3-bisphosphoglycerate-independent phosphoglycerate mutase (532 aa).

2 residues coordinate Mn(2+): Asp15 and Ser65. Ser65 (phosphoserine intermediate) is an active-site residue. Residues His126, 156–157 (RD), Arg188, Arg194, 258–261 (RPDR), and Lys331 contribute to the substrate site. Residues Asp398, His402, Asp439, His440, and His457 each contribute to the Mn(2+) site.

It belongs to the BPG-independent phosphoglycerate mutase family. As to quaternary structure, monomer. Mn(2+) is required as a cofactor.

It catalyses the reaction (2R)-2-phosphoglycerate = (2R)-3-phosphoglycerate. The protein operates within carbohydrate degradation; glycolysis; pyruvate from D-glyceraldehyde 3-phosphate: step 3/5. In terms of biological role, catalyzes the interconversion of 2-phosphoglycerate and 3-phosphoglycerate. This is 2,3-bisphosphoglycerate-independent phosphoglycerate mutase from Gloeothece citriformis (strain PCC 7424) (Cyanothece sp. (strain PCC 7424)).